The sequence spans 532 residues: Membrane protein insertase YidC (532 aa).

A run of 6 helical transmembrane segments spans residues 6 to 26 (IVLA…FAEY), 317 to 337 (AIDF…LTFF), 342 to 362 (GNWG…FWPL), 411 to 431 (GGCL…QALL), 451 to 473 (VWLA…GASM), and 496 to 516 (PIIF…YWLF).

The protein belongs to the OXA1/ALB3/YidC family. Type 1 subfamily. In terms of assembly, interacts with the Sec translocase complex via SecD. Specifically interacts with transmembrane segments of nascent integral membrane proteins during membrane integration.

Its subcellular location is the cell membrane. Required for the insertion and/or proper folding and/or complex formation of integral membrane proteins into the membrane. Involved in integration of membrane proteins that insert both dependently and independently of the Sec translocase complex, as well as at least some lipoproteins. Aids folding of multispanning membrane proteins. In Lawsonia intracellularis (strain PHE/MN1-00), this protein is Membrane protein insertase YidC.